We begin with the raw amino-acid sequence, 434 residues long: UPF0597 protein CLI_2075 (434 aa).

This sequence belongs to the UPF0597 family.

This chain is UPF0597 protein CLI_2075, found in Clostridium botulinum (strain Langeland / NCTC 10281 / Type F).